Reading from the N-terminus, the 1084-residue chain is Siderophore biosynthesis regulatory protein URBS1 (1084 aa).

Disordered stretches follow at residues 1–164 (MALP…QSSS), 245–283 (AEEHAKMQRYSDEHPRAMNPTSRASYEHESRGMPYRDSY), and 300–337 (RPVHHADSSTNSPQYVPGDVYEHEGSGSPPAAHHAGMR). The span at 23-51 (QAAAASSSSSSSSSHHPPPRIAARPIAPA) shows a compositional bias: low complexity. Composition is skewed to polar residues over residues 97–106 (SHHNASSTAT) and 128–141 (RSQSPIAAFRNRSQ). A compositionally biased stretch (low complexity) spans 150–164 (PSRSQPNSPLLQSSS). Basic and acidic residues predominate over residues 245-260 (AEEHAKMQRYSDEHPR). The GATA-type 1 zinc finger occupies 338 to 362 (CSNCGVTSTPLWRRAPDGSTICNAC). 2 disordered regions span residues 372 to 405 (HRSASNRLSGSDASPPTHEAKLAAAGPSCSREDD) and 442 to 472 (VSKRESQTSEDPPPARTAERAPPVAEEKMDD). Residues 373–385 (RSASNRLSGSDAS) are compositionally biased toward polar residues. The GATA-type 2 zinc-finger motif lies at 482 to 506 (CTNCQTTTTPLWRRDEDGNNICNAC). Disordered stretches follow at residues 559–595 (IAPAAGRNAGDSTPKSTESRRASKKSSLTSEQAMREA), 643–679 (RAGADTARTSHPDDSRSSKRPRQSYPLAPREAYDERD), 692–803 (THAA…TKLS), 841–940 (EAAG…SRRN), 953–1019 (AAVP…DDHW), and 1040–1084 (ARPV…APRT). Composition is skewed to basic and acidic residues over residues 650 to 659 (RTSHPDDSRS) and 715 to 725 (RLGRSELHGES). Residues 752–781 (PHHHHHHHHHHANHASHAVHHGHHHHHHHP) are compositionally biased toward basic residues. Residues 875–888 (RGTRSGHDSIKQEA) are compositionally biased toward basic and acidic residues. A compositionally biased stretch (polar residues) spans 961 to 970 (SPPSTVSNPA). Over residues 1070-1084 (PVASSPSQAVSAPRT) the composition is skewed to low complexity.

It localises to the nucleus. Functionally, involved in the regulation of secreted ferrichrome-type siderophores. Acts directly or indirectly to repress the biosynthesis of siderophores. This is Siderophore biosynthesis regulatory protein URBS1 (URBS1) from Mycosarcoma maydis (Corn smut fungus).